A 131-amino-acid chain; its full sequence is uncharacterized protein (131 aa).

The segment at 99–131 is disordered; that stretch reads NAIQEEEIDMEQQEEKEEKPREKGKKKSVEEEF. Positions 102-113 are enriched in acidic residues; it reads QEEEIDMEQQEE. The span at 114 to 131 shows a compositional bias: basic and acidic residues; sequence KEEKPREKGKKKSVEEEF.

This is an uncharacterized protein from Sulfolobus islandicus rod-shaped virus 1 (SIRV-1).